Consider the following 330-residue polypeptide: Aspartate--ammonia ligase (330 aa).

Belongs to the class-II aminoacyl-tRNA synthetase family. AsnA subfamily.

The protein resides in the cytoplasm. The catalysed reaction is L-aspartate + NH4(+) + ATP = L-asparagine + AMP + diphosphate + H(+). It functions in the pathway amino-acid biosynthesis; L-asparagine biosynthesis; L-asparagine from L-aspartate (ammonia route): step 1/1. In Escherichia fergusonii (strain ATCC 35469 / DSM 13698 / CCUG 18766 / IAM 14443 / JCM 21226 / LMG 7866 / NBRC 102419 / NCTC 12128 / CDC 0568-73), this protein is Aspartate--ammonia ligase.